A 266-amino-acid polypeptide reads, in one-letter code: Thymidylate synthase (266 aa).

Arg-24 contributes to the dUMP binding site. Residue His-54 coordinates (6R)-5,10-methylene-5,6,7,8-tetrahydrofolate. 129–130 (RR) serves as a coordination point for dUMP. Cys-149 (nucleophile) is an active-site residue. DUMP is bound by residues 169–172 (RSAD), Asn-180, and 210–212 (HIY). Residue Asp-172 participates in (6R)-5,10-methylene-5,6,7,8-tetrahydrofolate binding. Ala-265 is a binding site for (6R)-5,10-methylene-5,6,7,8-tetrahydrofolate.

This sequence belongs to the thymidylate synthase family. Bacterial-type ThyA subfamily. In terms of assembly, homodimer.

It is found in the cytoplasm. The catalysed reaction is dUMP + (6R)-5,10-methylene-5,6,7,8-tetrahydrofolate = 7,8-dihydrofolate + dTMP. It functions in the pathway pyrimidine metabolism; dTTP biosynthesis. Its function is as follows. Catalyzes the reductive methylation of 2'-deoxyuridine-5'-monophosphate (dUMP) to 2'-deoxythymidine-5'-monophosphate (dTMP) while utilizing 5,10-methylenetetrahydrofolate (mTHF) as the methyl donor and reductant in the reaction, yielding dihydrofolate (DHF) as a by-product. This enzymatic reaction provides an intracellular de novo source of dTMP, an essential precursor for DNA biosynthesis. The protein is Thymidylate synthase of Mycobacterium leprae (strain TN).